The chain runs to 375 residues: GDSL esterase/lipase At5g45960 (375 aa).

An N-terminal signal peptide occupies residues 1-28 (MRSHHRHFSSYVSFILFLFLFFISFSSS). Residue Ser-54 is the Nucleophile of the active site. An N-linked (GlcNAc...) asparagine glycan is attached at Asn-340. Active-site residues include Asp-348 and His-351.

Belongs to the 'GDSL' lipolytic enzyme family.

It localises to the secreted. This is GDSL esterase/lipase At5g45960 from Arabidopsis thaliana (Mouse-ear cress).